We begin with the raw amino-acid sequence, 241 residues long: Uridylate kinase (241 aa).

ATP is bound at residue 9–10 (GS). UMP is bound at residue G44. G45 and R49 together coordinate ATP. UMP contacts are provided by residues D66 and 114 to 120 (IMPGQTT). The ATP site is built by T140, Y146, and D149.

This sequence belongs to the UMP kinase family. As to quaternary structure, homohexamer.

It localises to the cytoplasm. It carries out the reaction UMP + ATP = UDP + ADP. It participates in pyrimidine metabolism; CTP biosynthesis via de novo pathway; UDP from UMP (UMPK route): step 1/1. Its activity is regulated as follows. Inhibited by UTP. Functionally, catalyzes the reversible phosphorylation of UMP to UDP. This is Uridylate kinase from Haloquadratum walsbyi (strain DSM 16790 / HBSQ001).